The following is a 501-amino-acid chain: Lysine--tRNA ligase (501 aa).

The Mg(2+) site is built by Glu404 and Glu411.

This sequence belongs to the class-II aminoacyl-tRNA synthetase family. In terms of assembly, homodimer. Requires Mg(2+) as cofactor.

The protein resides in the cytoplasm. The catalysed reaction is tRNA(Lys) + L-lysine + ATP = L-lysyl-tRNA(Lys) + AMP + diphosphate. The protein is Lysine--tRNA ligase of Campylobacter jejuni subsp. doylei (strain ATCC BAA-1458 / RM4099 / 269.97).